A 684-amino-acid polypeptide reads, in one-letter code: DNA ligase (684 aa).

NAD(+) contacts are provided by residues 34–38 (DFQYD), 83–84 (SL), and Glu117. The N6-AMP-lysine intermediate role is filled by Lys119. Arg140, Glu186, Lys300, and Lys324 together coordinate NAD(+). Zn(2+) is bound by residues Cys418, Cys421, Cys436, and Cys442. The region spanning 601–684 (PVNLNFDGMK…EMLGEVGSNE (84 aa)) is the BRCT domain.

This sequence belongs to the NAD-dependent DNA ligase family. LigA subfamily. Mg(2+) serves as cofactor. Requires Mn(2+) as cofactor.

It carries out the reaction NAD(+) + (deoxyribonucleotide)n-3'-hydroxyl + 5'-phospho-(deoxyribonucleotide)m = (deoxyribonucleotide)n+m + AMP + beta-nicotinamide D-nucleotide.. DNA ligase that catalyzes the formation of phosphodiester linkages between 5'-phosphoryl and 3'-hydroxyl groups in double-stranded DNA using NAD as a coenzyme and as the energy source for the reaction. It is essential for DNA replication and repair of damaged DNA. This chain is DNA ligase, found in Chlorobium phaeobacteroides (strain BS1).